We begin with the raw amino-acid sequence, 130 residues long: uncharacterized protein (130 aa).

Residues 23–130 (SHLRLLPTAN…GAHQLSSPSS (108 aa)) are disordered. Residues 30–45 (TANSPSGSNQPTNPNR) show a composition bias toward polar residues.

This is an uncharacterized protein from Homo sapiens (Human).